The chain runs to 331 residues: Hydroxysteroid dehydrogenase-like protein 1 (331 aa).

Residues 2–82 (AAVDRFNLLY…TGSTDGIGKA (81 aa)) are required for mitochondria translocation. NADP(+) contacts are provided by residues 74–80 (GSTDGIG) and aspartate 125. Serine 205 lines the substrate pocket. Tyrosine 218 functions as the Proton acceptor in the catalytic mechanism. Residue lysine 222 coordinates NADP(+).

Belongs to the short-chain dehydrogenases/reductases (SDR) family. 17-beta-HSD 3 subfamily.

Its subcellular location is the mitochondrion. May catalyze the metabolism of steroid hormones and thus play an important role in sex differentiation, the emergence and maintenance of the secondary sexual characters, and the regulation of endocrine. This is Hydroxysteroid dehydrogenase-like protein 1 (HSDL1) from Gallus gallus (Chicken).